A 365-amino-acid polypeptide reads, in one-letter code: 5-hydroxytryptamine receptor 1F (365 aa).

Topologically, residues 1–24 (MDFLNSSDQNLTSEELLNRMPSKI) are extracellular. 2 N-linked (GlcNAc...) asparagine glycosylation sites follow: Asn5 and Asn10. A helical membrane pass occupies residues 25–49 (LVSLTLSGLALMTTTINSLVIAAII). Residues 50 to 59 (VTRKLHHPAN) lie on the Cytoplasmic side of the membrane. Residues 60–81 (YLICSLAVTDFLVAVLVMPFSI) traverse the membrane as a helical segment. The Extracellular portion of the chain corresponds to 82–96 (VYIVRESWIMGQVVC). The cysteines at positions 96 and 172 are disulfide-linked. A helical membrane pass occupies residues 97 to 119 (DIWLSVDITCCTCSILHLSAIAL). The serotonin site is built by Asp103 and Cys107. Positions 120–122 (DRY) match the DRY motif; important for ligand-induced conformation changes motif. Over 120–139 (DRYRAITDAVEYARKRTPKH) the chain is Cytoplasmic. Residues 140-159 (AGIMITIVWIISVFISMPPL) traverse the membrane as a helical segment. The Extracellular portion of the chain corresponds to 160–178 (FWRHQGTSRDDECIIKHDH). Residues 179 to 202 (IVSTIYSTFGAFYIPLALILILYY) traverse the membrane as a helical segment. Over 203–291 (KIYRAAKTLY…KISGTRERKA (89 aa)) the chain is Cytoplasmic. A helical membrane pass occupies residues 292–315 (ATTLGLILGAFVICWLPFFVKELV). The Extracellular portion of the chain corresponds to 316–327 (VNVCDKCKISEE). The helical transmembrane segment at 328–350 (MSNFLAWLGYLNSLINPLIYTIF) threads the bilayer. The NPxxY motif; important for ligand-induced conformation changes and signaling motif lies at 343–347 (NPLIY). Residues 351 to 365 (NEDFKKAFQKLVRCR) lie on the Cytoplasmic side of the membrane.

It belongs to the G-protein coupled receptor 1 family.

The protein localises to the cell membrane. G-protein coupled receptor for 5-hydroxytryptamine (serotonin). Also functions as a receptor for various alkaloids and psychoactive substances. Ligand binding causes a conformation change that triggers signaling via guanine nucleotide-binding proteins (G proteins) and modulates the activity of downstream effectors, such as adenylate cyclase. HTR1F is coupled to G(i)/G(o) G alpha proteins and mediates inhibitory neurotransmission by inhibiting adenylate cyclase activity. This is 5-hydroxytryptamine receptor 1F (HTR1F) from Pan troglodytes (Chimpanzee).